A 121-amino-acid chain; its full sequence is Small ribosomal subunit protein uS13 (121 aa).

The segment at 93-121 (RNLPVRGQRTRTNARTCKGPRKSMNKQFK) is disordered. Over residues 110-121 (KGPRKSMNKQFK) the composition is skewed to basic residues.

This sequence belongs to the universal ribosomal protein uS13 family. As to quaternary structure, part of the 30S ribosomal subunit. Forms a loose heterodimer with protein S19. Forms two bridges to the 50S subunit in the 70S ribosome.

Its function is as follows. Located at the top of the head of the 30S subunit, it contacts several helices of the 16S rRNA. In the 70S ribosome it contacts the 23S rRNA (bridge B1a) and protein L5 of the 50S subunit (bridge B1b), connecting the 2 subunits; these bridges are implicated in subunit movement. Contacts the tRNAs in the A and P-sites. This is Small ribosomal subunit protein uS13 from Blochmanniella pennsylvanica (strain BPEN).